Here is a 548-residue protein sequence, read N- to C-terminus: CTP synthase (548 aa).

The segment at 1-270 (MTKYVFVTGG…DNIVCEALGL (270 aa)) is amidoligase domain. A CTP-binding site is contributed by Ser13. A UTP-binding site is contributed by Ser13. Residues 14–19 (SLGKGI) and Asp71 contribute to the ATP site. The Mg(2+) site is built by Asp71 and Glu144. CTP contacts are provided by residues 151 to 153 (DIE), 191 to 196 (KTKPTQ), and Lys227. Residues 191–196 (KTKPTQ) and Lys227 contribute to the UTP site. Residues 295-545 (TIGMVGKYVD…IEAAIANHAR (251 aa)) form the Glutamine amidotransferase type-1 domain. Gly356 is a binding site for L-glutamine. Cys383 serves as the catalytic Nucleophile; for glutamine hydrolysis. L-glutamine is bound by residues 384 to 387 (LGMQ), Glu407, and Arg473. Residues His518 and Glu520 contribute to the active site.

It belongs to the CTP synthase family. Homotetramer.

The enzyme catalyses UTP + L-glutamine + ATP + H2O = CTP + L-glutamate + ADP + phosphate + 2 H(+). It carries out the reaction L-glutamine + H2O = L-glutamate + NH4(+). It catalyses the reaction UTP + NH4(+) + ATP = CTP + ADP + phosphate + 2 H(+). The protein operates within pyrimidine metabolism; CTP biosynthesis via de novo pathway; CTP from UDP: step 2/2. Its activity is regulated as follows. Allosterically activated by GTP, when glutamine is the substrate; GTP has no effect on the reaction when ammonia is the substrate. The allosteric effector GTP functions by stabilizing the protein conformation that binds the tetrahedral intermediate(s) formed during glutamine hydrolysis. Inhibited by the product CTP, via allosteric rather than competitive inhibition. Functionally, catalyzes the ATP-dependent amination of UTP to CTP with either L-glutamine or ammonia as the source of nitrogen. Regulates intracellular CTP levels through interactions with the four ribonucleotide triphosphates. This chain is CTP synthase, found in Bordetella petrii (strain ATCC BAA-461 / DSM 12804 / CCUG 43448).